The primary structure comprises 65 residues: MPKLKTHRGLAKRIKISGSGKYLRKKAGKSHLLSGKSRKRKRNLKKTVIVDSTNVKAVKKLLPYL.

The protein belongs to the bacterial ribosomal protein bL35 family.

The protein is Large ribosomal subunit protein bL35 of Caldicellulosiruptor saccharolyticus (strain ATCC 43494 / DSM 8903 / Tp8T 6331).